A 189-amino-acid polypeptide reads, in one-letter code: Nuclear distribution protein nudE homolog 1 (189 aa).

Residues Asn-4–Ser-121 are a coiled coil. Over residues Val-114 to Arg-126 the composition is skewed to basic and acidic residues. A disordered region spans residues Val-114–Lys-139.

It belongs to the nudE family. As to quaternary structure, self-associates. Interacts with PAC1.

The protein localises to the nucleus. It is found in the cytoplasm. It localises to the cytoskeleton. In terms of biological role, required for nuclear migration to the bud neck during cell division. Targets cytoplasmic dynein to microtubule plus ends thereby promoting dynein-mediated microtubule sliding along the bud cortex and consequently the movement of the mitotic spindle to the bud neck. The chain is Nuclear distribution protein nudE homolog 1 (NDL1) from Saccharomyces cerevisiae (strain ATCC 204508 / S288c) (Baker's yeast).